The sequence spans 1058 residues: Protein translocase subunit SECA2, chloroplastic (1058 aa).

The transit peptide at 1–58 (MGSVSNLVSPNICHPAPPCLTSRSNKFPWTKPISGLLFYRSVTPIKRCHLVRRSCVVS) directs the protein to the chloroplast. Position 167-174 (167-174 (MKTGEGKT)) interacts with ATP.

This sequence belongs to the SecA family. In terms of assembly, part of a second Sec protein translocation apparatus. Interacts probably with SCY2.

It localises to the plastid. It is found in the chloroplast membrane. The catalysed reaction is ATP + H2O + chloroplast-proteinSide 1 = ADP + phosphate + chloroplast-proteinSide 2.. Involved in protein export. Probably interacts with other proteins to allow the postimport or conservative sorting pathway for inner membrane proteins in plastids. May have a central role in coupling the hydrolysis of ATP to the transfer of proteins across the membrane. The polypeptide is Protein translocase subunit SECA2, chloroplastic (Arabidopsis thaliana (Mouse-ear cress)).